Here is a 284-residue protein sequence, read N- to C-terminus: ASC1-like protein 3 (284 aa).

The next 6 helical transmembrane spans lie at 9–29 (SSFF…RFFL), 69–89 (LTYY…EPWS), 108–128 (LMLF…ALVA), 148–168 (ILIG…ILAL), 195–215 (FGLF…FWII), and 243–263 (MLLT…LMIM). A TLC domain is found at 60 to 267 (VKFSESIWKL…ICLMIMKQLN (208 aa)).

The protein localises to the endoplasmic reticulum membrane. Functionally, mediates resistance to sphinganine-analog mycotoxins (SAMs) by restoring the sphingolipid biosynthesis. Could salvage the transport of GPI-anchored proteins from the endoplasmic reticulum to the Golgi apparatus in ceramides-depleted cells after SAM exposure. The sequence is that of ASC1-like protein 3 from Oryza sativa subsp. japonica (Rice).